Consider the following 205-residue polypeptide: Ras-like protein 3 (205 aa).

16 to 23 contacts GTP; that stretch reads GGGGVGKS. Residues 38–46 carry the Effector region motif; it reads YDPTIEDSY. Residues 63 to 67 and 122 to 125 contribute to the GTP site; these read DTAGQ and NKCD. C202 bears the Cysteine methyl ester mark. A lipid anchor (S-farnesyl cysteine) is attached at C202. The propeptide at 203–205 is removed in mature form; the sequence is ILM.

Belongs to the small GTPase superfamily. Ras family.

The protein resides in the cell membrane. It catalyses the reaction GTP + H2O = GDP + phosphate + H(+). Its activity is regulated as follows. Alternates between an inactive form bound to GDP and an active form bound to GTP. Activated by a guanine nucleotide-exchange factor (GEF) and inactivated by a GTPase-activating protein (GAP). In Mucor circinelloides f. lusitanicus (Mucor racemosus var. lusitanicus), this protein is Ras-like protein 3 (RAS3).